The primary structure comprises 422 residues: Enolase (422 aa).

Position 163 (Q163) interacts with (2R)-2-phosphoglycerate. E205 functions as the Proton donor in the catalytic mechanism. Mg(2+) contacts are provided by D242, E283, and D310. Residues K335, R364, S365, and K386 each coordinate (2R)-2-phosphoglycerate. K335 functions as the Proton acceptor in the catalytic mechanism.

Belongs to the enolase family. Mg(2+) serves as cofactor.

The protein localises to the cytoplasm. The protein resides in the secreted. It is found in the cell surface. It carries out the reaction (2R)-2-phosphoglycerate = phosphoenolpyruvate + H2O. It functions in the pathway carbohydrate degradation; glycolysis; pyruvate from D-glyceraldehyde 3-phosphate: step 4/5. Catalyzes the reversible conversion of 2-phosphoglycerate (2-PG) into phosphoenolpyruvate (PEP). It is essential for the degradation of carbohydrates via glycolysis. The polypeptide is Enolase (Bdellovibrio bacteriovorus (strain ATCC 15356 / DSM 50701 / NCIMB 9529 / HD100)).